A 477-amino-acid chain; its full sequence is 3-succinoylsemialdehyde-pyridine dehydrogenase (477 aa).

An NAD(+)-binding site is contributed by 202–208; the sequence is GDGPGVG. Residues Glu-246 and Cys-280 contribute to the active site.

The protein belongs to the aldehyde dehydrogenase family.

The catalysed reaction is 4-oxo-4-(pyridin-3-yl)butanal + NADP(+) + H2O = 4-oxo-4-(pyridin-3-yl)butanoate + NADPH + 2 H(+). It participates in alkaloid degradation; nicotine degradation. Its function is as follows. Catalyzes the dehydrogenation of 3-succinoylsemialdehyde-pyridine to 3-succinoyl-pyridine in the nicotine degradation pathway. In Pseudomonas sp, this protein is 3-succinoylsemialdehyde-pyridine dehydrogenase (ald).